We begin with the raw amino-acid sequence, 237 residues long: Ribitol-5-phosphate cytidylyltransferase (237 aa).

CTP is bound by residues 7-10 (LAGG) and 80-86 (GEDRNET).

It belongs to the IspD/TarI cytidylyltransferase family. TarI subfamily.

It carries out the reaction D-ribitol 5-phosphate + CTP + H(+) = CDP-L-ribitol + diphosphate. The protein operates within cell wall biogenesis; poly(ribitol phosphate) teichoic acid biosynthesis. In terms of biological role, catalyzes the transfer of the cytidylyl group of CTP to D-ribitol 5-phosphate. The protein is Ribitol-5-phosphate cytidylyltransferase of Listeria innocua serovar 6a (strain ATCC BAA-680 / CLIP 11262).